Reading from the N-terminus, the 652-residue chain is MASAERVPVSFNKPGRVPFGEVQGYAPGHIPAYSNKHDHFFSGERSIDDNVFCGFKYQCVEFARRWLLERKGLVLPDVNWACHIFKLKNVKDAATAEEVPVIAVRNGTEAKPEPDTLIIYPSSDVNTVGHVGAITEVGDDYVCIADQNYRFHKWEASYSYKLKLQHKDGVWTIIDDIDPNDVEIPLGWVTFPGYENRPEGAAPPALHPSLHFQPPEEPYLVRKTYEPTETKANWLDLNDPAEKLFVEEFGMDVSRSRLEETTVNYYECDHEFHLRCIAYGTQLHDYFMEATAQVINDDERLRIFKIPEELWPRMRHSWKYQQTYISGRFDFAYNNETHQMKCFEYNADSASTLLECGRIQQKWAESVGLDKEGTRGSGWAVERNLRTAWATCGATGRVHFLVDDEKEEQYTALYCLQAAEAVGLEGKLCVMYDEFRFNEEGYVVDSDGVRVRNIWKTWMWESAISDYFAAQAERGADWKATPADKVRLCDLMLGKDWDILYFEPMWKLIPSNKAILPIIYHNHPDHPAILRAEYELTDELRAVGYARKPIVGRVGRNVTITDGTGEVHAESGGNFGERDMIYQELFSLTKQDGYYAIIGGWMLGDAFSGTGIREDKSIITGLDSPFAAIRIKINAIPRPLTHKDLDKLAEDE.

A Peptidase C51 domain is found at 34-174 (SNKHDHFFSG…QHKDGVWTII (141 aa)). 328-330 (RFD) lines the ATP pocket. 3 residues coordinate Mg(2+): Asp330, Glu344, and Asn346. ATP-binding positions include Lys513, Lys548, Gly555, Gln583, and 618-620 (IIT).

This sequence in the C-terminal section; belongs to the glutathionylspermidine synthase preATP-grasp family. Requires Mg(2+) as cofactor. Post-translationally, the N-terminus is blocked.

It carries out the reaction spermidine + glutathione + ATP = glutathionylspermidine + ADP + phosphate + H(+). The catalysed reaction is glutathionylspermidine + glutathione + ATP = trypanothione + ADP + phosphate + H(+). Functionally, conjugates glutathione (gamma-Glu-Cys-Gly) and glutathionylspermidine to form trypanothione (N(1),N(8)-bis(glutathionyl)spermidine), which is involved in maintaining intracellular thiol redox and in defense against oxidants. This Crithidia fasciculata protein is Trypanothione synthetase (TRS).